The sequence spans 713 residues: Cyclomaltodextrin glucanotransferase (713 aa).

Residues 1–27 (MKRFMKLTAVWTLWLSLTLGLLSPVHA) form the signal peptide. Residues 28–165 (APDTSVSNKQ…NIKVIIDFAP (138 aa)) form an A1 region. The Ca(2+) site is built by Asp54, Asn56, Asn59, and Asn60. Cys70 and Cys77 are disulfide-bonded. Ca(2+) is bound by residues Gly78 and Asp80. 127–128 (YW) is a binding site for substrate. Asn166 contributes to the Ca(2+) binding site. Positions 166–229 (NHTSPASSDD…NLYDLADLNH (64 aa)) are b. A substrate-binding site is contributed by His167. Ile217 lines the Ca(2+) pocket. 220 to 223 (NLYD) lines the substrate pocket. Asp226 lines the Ca(2+) pocket. The segment at 230–433 (NNSSVDVYLK…LRKSNPAIAY (204 aa)) is A2. Arg254 serves as a coordination point for substrate. Asp256 (nucleophile) is an active-site residue. 259–260 (KH) serves as a coordination point for substrate. His260 is a Ca(2+) binding site. The active-site Proton donor is the Glu284. Residues His354, Asp398, and Arg402 each contribute to the substrate site. A c region spans residues 434-522 (GSTHERWINN…GTAVWQYTTD (89 aa)). The d stretch occupies residues 523–609 (ATTPIIGNVG…SNIYDNFEVL (87 aa)). Positions 526-607 (PIIGNVGPMM…AASNIYDNFE (82 aa)) constitute an IPT/TIG domain. The CBM20 domain maps to 608 to 713 (VLTGDQVTVR…TATVNVNWQP (106 aa)). Positions 610-713 (TGDQVTVRFV…TATVNVNWQP (104 aa)) are e.

The protein belongs to the glycosyl hydrolase 13 family. Monomer. The cofactor is Ca(2+).

It is found in the secreted. The catalysed reaction is Cyclizes part of a (1-&gt;4)-alpha-D-glucan chain by formation of a (1-&gt;4)-alpha-D-glucosidic bond.. The sequence is that of Cyclomaltodextrin glucanotransferase (cgt) from Bacillus sp. (strain 1011).